An 86-amino-acid chain; its full sequence is Small ribosomal subunit protein bS16 (86 aa).

The protein belongs to the bacterial ribosomal protein bS16 family.

The sequence is that of Small ribosomal subunit protein bS16 from Trichormus variabilis (strain ATCC 29413 / PCC 7937) (Anabaena variabilis).